A 167-amino-acid polypeptide reads, in one-letter code: SsrA-binding protein (167 aa).

This sequence belongs to the SmpB family.

The protein localises to the cytoplasm. Required for rescue of stalled ribosomes mediated by trans-translation. Binds to transfer-messenger RNA (tmRNA), required for stable association of tmRNA with ribosomes. tmRNA and SmpB together mimic tRNA shape, replacing the anticodon stem-loop with SmpB. tmRNA is encoded by the ssrA gene; the 2 termini fold to resemble tRNA(Ala) and it encodes a 'tag peptide', a short internal open reading frame. During trans-translation Ala-aminoacylated tmRNA acts like a tRNA, entering the A-site of stalled ribosomes, displacing the stalled mRNA. The ribosome then switches to translate the ORF on the tmRNA; the nascent peptide is terminated with the 'tag peptide' encoded by the tmRNA and targeted for degradation. The ribosome is freed to recommence translation, which seems to be the essential function of trans-translation. The polypeptide is SsrA-binding protein (Stenotrophomonas maltophilia (strain K279a)).